The sequence spans 154 residues: Small ribosomal subunit protein bS6 (154 aa).

A disordered region spans residues 94–154; sequence VKQEGPLPTP…SSQGKESQKS (61 aa). The segment covering 103-112 has biased composition (polar residues); sequence PRSSNKGYNQ. The segment covering 113 to 139 has biased composition (basic and acidic residues); that stretch reads SEKKDIESIDSTNKSEFKEEANDKKTA. Residues 140–154 are compositionally biased toward polar residues; the sequence is TSESTSSQGKESQKS.

This sequence belongs to the bacterial ribosomal protein bS6 family.

Functionally, binds together with bS18 to 16S ribosomal RNA. In Prochlorococcus marinus subsp. pastoris (strain CCMP1986 / NIES-2087 / MED4), this protein is Small ribosomal subunit protein bS6.